The chain runs to 62 residues: 2-hydroxymuconate tautomerase (62 aa).

P2 serves as the catalytic Proton acceptor; via imino nitrogen. 9-12 (LEGR) serves as a coordination point for substrate.

This sequence belongs to the 4-oxalocrotonate tautomerase family. Homohexamer.

It catalyses the reaction (2Z,4E)-2-hydroxyhexa-2,4-dienedioate = (3E)-2-oxohex-3-enedioate. In terms of biological role, catalyzes both 1,3- and 1,5-keto-enol tautomerization of the diacid 2-hydroxymuconate (2-hydroxy-2,4-hexadienedioate) to produce 2-oxo-4-hexenedioate. This reaction is highly stereoselective and produces a mixture of stereoisomers, where the (3S)-isomer of 2-oxo-4-hexenedioate predominates. Also catalyzes the tautomerization of 2-hydroxymuconate to 2-oxo-3-hexenedioate, however this reaction is slower and occurs after the tautomerization of 2-hydroxymuconate to 2-oxo-4-hexenedioate. Using 2-hydroxy-2,4-pentadienoate, phenylenolpyruvate, (p-hydroxyphenyl)-enolpyruvate and 2-hydroxy-2,4-heptadiene-1,7-dioate, YwhB is a highly efficient 1,3-keto-enol tautomerase, but clearly not a 1,5-keto-enol tautomerase. Tautomerization of the two monoacids 2-hydroxy-2,4-pentadienoate and phenylenolpyruvate produces a mixture of stereoisomers, where the (3R)-isomers predominate. In Bacillus subtilis (strain 168), this protein is 2-hydroxymuconate tautomerase (ywhB).